The sequence spans 220 residues: Ribonuclease HII (220 aa).

Residues 32 to 220 (KHIVGIDEAG…FAPIKGRYSV (189 aa)) enclose the RNase H type-2 domain. 3 residues coordinate a divalent metal cation: Asp-38, Glu-39, and Asp-130.

Belongs to the RNase HII family. Requires Mn(2+) as cofactor. Mg(2+) is required as a cofactor.

It localises to the cytoplasm. The enzyme catalyses Endonucleolytic cleavage to 5'-phosphomonoester.. In terms of biological role, endonuclease that specifically degrades the RNA of RNA-DNA hybrids. The polypeptide is Ribonuclease HII (Brucella anthropi (strain ATCC 49188 / DSM 6882 / CCUG 24695 / JCM 21032 / LMG 3331 / NBRC 15819 / NCTC 12168 / Alc 37) (Ochrobactrum anthropi)).